The following is a 275-amino-acid chain: Tryptophan synthase alpha chain (275 aa).

Residue glutamate 51 is the Proton acceptor of the active site.

This sequence belongs to the TrpA family. In terms of assembly, tetramer of two alpha and two beta chains.

The catalysed reaction is (1S,2R)-1-C-(indol-3-yl)glycerol 3-phosphate + L-serine = D-glyceraldehyde 3-phosphate + L-tryptophan + H2O. It functions in the pathway amino-acid biosynthesis; L-tryptophan biosynthesis; L-tryptophan from chorismate: step 5/5. The alpha subunit is responsible for the aldol cleavage of indoleglycerol phosphate to indole and glyceraldehyde 3-phosphate. The chain is Tryptophan synthase alpha chain from Caulobacter vibrioides (strain ATCC 19089 / CIP 103742 / CB 15) (Caulobacter crescentus).